We begin with the raw amino-acid sequence, 640 residues long: MAQYKFETEVNQLLSLIIHSLYSNKEIFLRELVSNASDALDKLKYLTLSDEAYKQIKFEPRIDICFDDTANTLTVRDTGLGMNEEDLKNNLGTIARSGTKAFLDQLAAADKKDSNLIGQFGVGFYSAFMAASTIDVISKKAGENDVWKWTSDGKGAYDLEKVDDTAFPIIDGVPEGANGTCVILHLNNEDSEYATRWRIEEIIKTYSDHIAFPIYLHFTEKQYDDKGKVKSEASKTEQINDAGAIWQKPKSELKEEDYFNFYKSLSHDSQEPLLYVHTKAEGTQEYTTLFYVPSKAPFDMFHADYRPGVKLFVKRVFITDDEKELLPTYLRFVRGVIDSEDLPLNVSREILQQNRILSNIKNASVKKLLGEFKKLAENDKEKYNKFIAEFNRPLKEGLYSDYEHREELADLVRFKTTSPEVKEDEWTSFADYVSRMKSDQKAIYYITGEDEKTLRQSPHLEVYKQKGFEVLIMPDEIDDIIIPSLGKYKDWELKAANRAGSDKELNTEEETKEAEKKEKDFKPVLEKIKEVLGDKVKEVRFSKRLSDSPSCIVVDETDPSLQMERMMRAMGQFNTSAVKPILEVNADHPLVQKLKDSKDKEFVEDMSNLLLEQALLVESGELKAPVDFVKRLNRLMTNLK.

An a; substrate-binding region spans residues 1–348 (MAQYKFETEV…SEDLPLNVSR (348 aa)). The tract at residues 349-565 (EILQQNRILS…ETDPSLQMER (217 aa)) is b. The segment at 566–640 (MMRAMGQFNT…RLNRLMTNLK (75 aa)) is c.

The protein belongs to the heat shock protein 90 family. As to quaternary structure, homodimer.

Its subcellular location is the cytoplasm. Its function is as follows. Molecular chaperone. Has ATPase activity. This Treponema denticola (strain ATCC 35405 / DSM 14222 / CIP 103919 / JCM 8153 / KCTC 15104) protein is Chaperone protein HtpG.